The primary structure comprises 256 residues: Acetylglutamate kinase (256 aa).

Substrate is bound by residues 40–41 (GG), R62, and N153.

It belongs to the acetylglutamate kinase family. ArgB subfamily.

It is found in the cytoplasm. It catalyses the reaction N-acetyl-L-glutamate + ATP = N-acetyl-L-glutamyl 5-phosphate + ADP. Its pathway is amino-acid biosynthesis; L-arginine biosynthesis; N(2)-acetyl-L-ornithine from L-glutamate: step 2/4. Its function is as follows. Catalyzes the ATP-dependent phosphorylation of N-acetyl-L-glutamate. The protein is Acetylglutamate kinase of Bacillus cytotoxicus (strain DSM 22905 / CIP 110041 / 391-98 / NVH 391-98).